The sequence spans 120 residues: NAD(P)H-quinone oxidoreductase subunit 3 (120 aa).

3 helical membrane passes run 6–26 (GYDA…LALV), 64–84 (MFAL…PWAV), and 89–109 (LGLL…VALA).

It belongs to the complex I subunit 3 family. As to quaternary structure, NDH-1 can be composed of about 15 different subunits; different subcomplexes with different compositions have been identified which probably have different functions.

The protein resides in the cellular thylakoid membrane. It catalyses the reaction a plastoquinone + NADH + (n+1) H(+)(in) = a plastoquinol + NAD(+) + n H(+)(out). It carries out the reaction a plastoquinone + NADPH + (n+1) H(+)(in) = a plastoquinol + NADP(+) + n H(+)(out). Its function is as follows. NDH-1 shuttles electrons from an unknown electron donor, via FMN and iron-sulfur (Fe-S) centers, to quinones in the respiratory and/or the photosynthetic chain. The immediate electron acceptor for the enzyme in this species is believed to be plastoquinone. Couples the redox reaction to proton translocation, and thus conserves the redox energy in a proton gradient. Cyanobacterial NDH-1 also plays a role in inorganic carbon-concentration. The protein is NAD(P)H-quinone oxidoreductase subunit 3 of Synechococcus sp. (strain CC9605).